The sequence spans 87 residues: MEIKFINIGFGNIVSANRIISIVSPESAPIKRIISEARDKGMLIDATYGRRTRAVIIMDSDHVILSAVQPETVAHRLNTKENQEENF.

Belongs to the RemA family.

In Carboxydothermus hydrogenoformans (strain ATCC BAA-161 / DSM 6008 / Z-2901), this protein is Putative regulatory protein CHY_1489.